We begin with the raw amino-acid sequence, 290 residues long: tRNA dimethylallyltransferase (290 aa).

11–18 (GPTASGKS) is a binding site for ATP. Position 13–18 (13–18 (TASGKS)) interacts with substrate. 2 interaction with substrate tRNA regions span residues 36–39 (DSMQ) and 158–162 (QRIVR).

Belongs to the IPP transferase family. In terms of assembly, monomer. The cofactor is Mg(2+).

The catalysed reaction is adenosine(37) in tRNA + dimethylallyl diphosphate = N(6)-dimethylallyladenosine(37) in tRNA + diphosphate. Its function is as follows. Catalyzes the transfer of a dimethylallyl group onto the adenine at position 37 in tRNAs that read codons beginning with uridine, leading to the formation of N6-(dimethylallyl)adenosine (i(6)A). In Bartonella henselae (strain ATCC 49882 / DSM 28221 / CCUG 30454 / Houston 1) (Rochalimaea henselae), this protein is tRNA dimethylallyltransferase.